A 170-amino-acid polypeptide reads, in one-letter code: Protein BTG1 (170 aa).

Belongs to the BTG family.

Anti-proliferative protein. This Gallus gallus (Chicken) protein is Protein BTG1 (BTG1).